Reading from the N-terminus, the 468-residue chain is Zinc-regulated transporter 1 (468 aa).

The first 17 residues, Met1–Thr17, serve as a signal peptide directing secretion. The Extracellular portion of the chain corresponds to Glu18–Arg185. Asn57 and Asn67 each carry an N-linked (GlcNAc...) asparagine glycan. A helical membrane pass occupies residues Ile186–Leu206. At Lys207–Tyr217 the chain is on the cytoplasmic side. A helical membrane pass occupies residues Ile218–Leu238. Residues Met239–Gly257 are Extracellular-facing. Residues Thr258–Leu278 form a helical membrane-spanning segment. Residues Arg279 to Ser314 lie on the Cytoplasmic side of the membrane. A helical membrane pass occupies residues Val315 to Val335. The Extracellular portion of the chain corresponds to Thr336–Asp338. A helical membrane pass occupies residues Val339 to Leu359. At Ser360–Lys374 the chain is on the cytoplasmic side. A helical membrane pass occupies residues Leu375 to Val395. Topologically, residues Leu396–Thr406 are extracellular. Residues Leu407–Ile427 form a helical membrane-spanning segment. Topologically, residues Glu428–Thr447 are cytoplasmic. Residues Thr448 to Ala468 form a helical membrane-spanning segment.

It belongs to the ZIP transporter (TC 2.A.5) family.

It localises to the cell membrane. It carries out the reaction Zn(2+)(in) = Zn(2+)(out). Functionally, zinc transporter that acts with PRA1 in sequestration of zinc from host tissues during infection. The pH-regulated antigen 1 (PRA1) binds zinc from its environment and then reassociates with ZRT1 to acquire this essential metal. This chain is Zinc-regulated transporter 1 (ZRT101), found in Candida albicans (strain SC5314 / ATCC MYA-2876) (Yeast).